Here is a 161-residue protein sequence, read N- to C-terminus: Putative TRAP transporter small permease protein HI_1030 (161 aa).

4 helical membrane passes run 13 to 33, 51 to 71, 86 to 106, and 135 to 155; these read LEIL…LNVV, YLFI…NQHV, AILK…IIEG, and IAGI…IFFI.

This sequence belongs to the TRAP transporter small permease family.

It localises to the cell inner membrane. The polypeptide is Putative TRAP transporter small permease protein HI_1030 (Haemophilus influenzae (strain ATCC 51907 / DSM 11121 / KW20 / Rd)).